Here is a 258-residue protein sequence, read N- to C-terminus: 5'-nucleotidase SurE (258 aa).

A divalent metal cation is bound by residues D18, D19, S49, and N102.

This sequence belongs to the SurE nucleotidase family. A divalent metal cation serves as cofactor.

Its subcellular location is the cytoplasm. It carries out the reaction a ribonucleoside 5'-phosphate + H2O = a ribonucleoside + phosphate. Functionally, nucleotidase that shows phosphatase activity on nucleoside 5'-monophosphates. This chain is 5'-nucleotidase SurE, found in Vibrio parahaemolyticus serotype O3:K6 (strain RIMD 2210633).